Here is a 316-residue protein sequence, read N- to C-terminus: Nucleoprotein (316 aa).

RNA-binding residues include Tyr43, Tyr46, Val76, Arg122, and Lys240.

Belongs to the tenuiviruses nucleocapsid protein family.

It localises to the virion. It is found in the host cytoplasm. In terms of biological role, encapsidates the genome, protecting it from nucleases. The encapsidated genomic RNA is termed the nucleocapsid (NC), and serves as template for viral transcription and replication. This chain is Nucleoprotein, found in Maize stripe virus (MStV).